We begin with the raw amino-acid sequence, 127 residues long: Fluoride-specific ion channel FluC (127 aa).

4 helical membrane-spanning segments follow: residues 3-23 (LVFL…YFVG), 38-58 (LGTF…GHLA), 67-87 (FGIF…SYGL), and 102-122 (ISYV…GWFL). Na(+) contacts are provided by glycine 77 and threonine 80.

This sequence belongs to the fluoride channel Fluc/FEX (TC 1.A.43) family.

The protein resides in the cell inner membrane. The catalysed reaction is fluoride(in) = fluoride(out). With respect to regulation, na(+) is not transported, but it plays an essential structural role and its presence is essential for fluoride channel function. Functionally, fluoride-specific ion channel. Important for reducing fluoride concentration in the cell, thus reducing its toxicity. In Helicobacter acinonychis (strain Sheeba), this protein is Fluoride-specific ion channel FluC.